A 252-amino-acid polypeptide reads, in one-letter code: tRNA1(Val) (adenine(37)-N6)-methyltransferase (252 aa).

The protein belongs to the methyltransferase superfamily. tRNA (adenine-N(6)-)-methyltransferase family.

The protein resides in the cytoplasm. The catalysed reaction is adenosine(37) in tRNA1(Val) + S-adenosyl-L-methionine = N(6)-methyladenosine(37) in tRNA1(Val) + S-adenosyl-L-homocysteine + H(+). Specifically methylates the adenine in position 37 of tRNA(1)(Val) (anticodon cmo5UAC). This is tRNA1(Val) (adenine(37)-N6)-methyltransferase from Yersinia pseudotuberculosis serotype IB (strain PB1/+).